The chain runs to 343 residues: Tryptophan--tRNA ligase (343 aa).

ATP is bound by residues 15-17 (QPT) and 24-25 (GN). The 'HIGH' region signature appears at 16 to 25 (PTSDSLHLGN). Aspartate 145 provides a ligand contact to L-tryptophan. Residues 157–159 (GED), isoleucine 196, and 205–209 (KMSKS) each bind ATP. The 'KMSKS' region motif lies at 205–209 (KMSKS).

It belongs to the class-I aminoacyl-tRNA synthetase family. In terms of assembly, homodimer.

The protein localises to the cytoplasm. It catalyses the reaction tRNA(Trp) + L-tryptophan + ATP = L-tryptophyl-tRNA(Trp) + AMP + diphosphate + H(+). Its function is as follows. Catalyzes the attachment of tryptophan to tRNA(Trp). This Mycobacterium leprae (strain TN) protein is Tryptophan--tRNA ligase.